Consider the following 388-residue polypeptide: Succinate--CoA ligase [ADP-forming] subunit beta (388 aa).

The 237-residue stretch at 9–245 (KELLASYGLP…KSQENERELK (237 aa)) folds into the ATP-grasp domain. Residues Lys-46, 53–55 (GRG), Glu-100, Tyr-103, and Glu-108 each bind ATP. Mg(2+) contacts are provided by Asn-200 and Asp-214. Substrate-binding positions include Asn-265 and 322-324 (GIV).

Belongs to the succinate/malate CoA ligase beta subunit family. Heterotetramer of two alpha and two beta subunits. Requires Mg(2+) as cofactor.

The catalysed reaction is succinate + ATP + CoA = succinyl-CoA + ADP + phosphate. It carries out the reaction GTP + succinate + CoA = succinyl-CoA + GDP + phosphate. Its pathway is carbohydrate metabolism; tricarboxylic acid cycle; succinate from succinyl-CoA (ligase route): step 1/1. In terms of biological role, succinyl-CoA synthetase functions in the citric acid cycle (TCA), coupling the hydrolysis of succinyl-CoA to the synthesis of either ATP or GTP and thus represents the only step of substrate-level phosphorylation in the TCA. The beta subunit provides nucleotide specificity of the enzyme and binds the substrate succinate, while the binding sites for coenzyme A and phosphate are found in the alpha subunit. This is Succinate--CoA ligase [ADP-forming] subunit beta from Neisseria meningitidis serogroup A / serotype 4A (strain DSM 15465 / Z2491).